We begin with the raw amino-acid sequence, 275 residues long: Large ribosomal subunit protein uL2 (275 aa).

The segment at 212-259 is disordered; it reads RWKGIRPTNRGVTMNPVDHPHGGGEGKTSGGRHPVTPWGQPTRGYKTR.

Belongs to the universal ribosomal protein uL2 family. In terms of assembly, part of the 50S ribosomal subunit. Forms a bridge to the 30S subunit in the 70S ribosome.

Its function is as follows. One of the primary rRNA binding proteins. Required for association of the 30S and 50S subunits to form the 70S ribosome, for tRNA binding and peptide bond formation. It has been suggested to have peptidyltransferase activity; this is somewhat controversial. Makes several contacts with the 16S rRNA in the 70S ribosome. This chain is Large ribosomal subunit protein uL2, found in Acidobacterium capsulatum (strain ATCC 51196 / DSM 11244 / BCRC 80197 / JCM 7670 / NBRC 15755 / NCIMB 13165 / 161).